A 245-amino-acid polypeptide reads, in one-letter code: Cell division protein ZapD (245 aa).

The protein belongs to the ZapD family. In terms of assembly, interacts with FtsZ.

The protein resides in the cytoplasm. Cell division factor that enhances FtsZ-ring assembly. Directly interacts with FtsZ and promotes bundling of FtsZ protofilaments, with a reduction in FtsZ GTPase activity. This chain is Cell division protein ZapD, found in Photobacterium profundum (strain SS9).